Consider the following 377-residue polypeptide: Protein-tyrosine sulfotransferase 2 (377 aa).

Residues 1–8 (MRLSMRRA) lie on the Cytoplasmic side of the membrane. A helical; Signal-anchor for type II membrane protein membrane pass occupies residues 9 to 25 (LLAAGLALALVLAVHLG). The Lumenal segment spans residues 26–377 (QRVLECQAVL…NSTSSHLGSS (352 aa)). 78-82 (RSGTT) provides a ligand contact to 3'-phosphoadenylyl sulfate. C96 and C156 are oxidised to a cystine. The active-site Proton donor/acceptor is the E99. The tract at residues 101–105 (RIIPR) is interaction with peptide substrate. The 3'-phosphoadenylyl sulfate site is built by R183, S191, and R195. C225 and C233 form a disulfide bridge. 3'-phosphoadenylyl sulfate-binding positions include Y238, 285-294 (STDQVIKPVN), and K300. N343 and N368 each carry an N-linked (GlcNAc...) asparagine glycan.

Belongs to the protein sulfotransferase family. As to quaternary structure, homodimer. Can also form heterodimers with TPST1. In terms of processing, N-glycosylated.

It is found in the golgi apparatus membrane. It carries out the reaction L-tyrosyl-[protein] + 3'-phosphoadenylyl sulfate = O-sulfo-L-tyrosine-[protein] + adenosine 3',5'-bisphosphate + H(+). Functionally, catalyzes the O-sulfation of tyrosine residues within acidic motifs of polypeptides, using 3'-phosphoadenylyl sulfate (PAPS) as cosubstrate. The chain is Protein-tyrosine sulfotransferase 2 (TPST2) from Bos taurus (Bovine).